We begin with the raw amino-acid sequence, 460 residues long: tRNA-splicing endonuclease subunit Sen2 (460 aa).

The interval 143–215 (EKEETPQHEP…SPSSHNGHVA (73 aa)) is disordered. Basic and acidic residues predominate over residues 159 to 170 (SSLEGRVEKDEL). Catalysis depends on residues tyrosine 364 and histidine 372. Phosphoserine is present on residues serine 403, serine 406, and serine 410. Lysine 411 is a catalytic residue.

This sequence belongs to the tRNA-intron endonuclease family. As to quaternary structure, tRNA splicing endonuclease is a heterotetramer composed of TSEN2, TSEN15, TSEN34/LENG5 and TSEN54. tRNA splicing endonuclease complex also contains proteins of the pre-mRNA 3'-end processing machinery such as CLP1, CPSF1, CPSF4 and CSTF2.

The protein localises to the nucleus. It localises to the nucleolus. It carries out the reaction pretRNA = a 3'-half-tRNA molecule with a 5'-OH end + a 5'-half-tRNA molecule with a 2',3'-cyclic phosphate end + an intron with a 2',3'-cyclic phosphate and a 5'-hydroxyl terminus.. Functionally, constitutes one of the two catalytic subunit of the tRNA-splicing endonuclease complex, a complex responsible for identification and cleavage of the splice sites in pre-tRNA. It cleaves pre-tRNA at the 5'- and 3'-splice sites to release the intron. The products are an intron and two tRNA half-molecules bearing 2',3'-cyclic phosphate and 5'-OH termini. There are no conserved sequences at the splice sites, but the intron is invariably located at the same site in the gene, placing the splice sites an invariant distance from the constant structural features of the tRNA body. Probably carries the active site for 5'-splice site cleavage. The tRNA splicing endonuclease is also involved in mRNA processing via its association with pre-mRNA 3'-end processing factors, establishing a link between pre-tRNA splicing and pre-mRNA 3'-end formation, suggesting that the endonuclease subunits function in multiple RNA-processing events. The sequence is that of tRNA-splicing endonuclease subunit Sen2 (Tsen2) from Mus musculus (Mouse).